We begin with the raw amino-acid sequence, 528 residues long: Phosphoenolpyruvate carboxykinase (ATP) (528 aa).

The substrate site is built by Arg-54, Tyr-190, and Lys-196. Residues Lys-196, His-215, and 231–239 contribute to the ATP site; that span reads GLSGTGKTT. The Mn(2+) site is built by Lys-196 and His-215. Asp-252 serves as a coordination point for Mn(2+). Residues Glu-280, Arg-316, and Thr-441 each coordinate ATP. Residue Arg-316 coordinates substrate.

This sequence belongs to the phosphoenolpyruvate carboxykinase (ATP) family. Mn(2+) serves as cofactor.

It localises to the cytoplasm. The catalysed reaction is oxaloacetate + ATP = phosphoenolpyruvate + ADP + CO2. Its pathway is carbohydrate biosynthesis; gluconeogenesis. Its function is as follows. Involved in the gluconeogenesis. Catalyzes the conversion of oxaloacetate (OAA) to phosphoenolpyruvate (PEP) through direct phosphoryl transfer between the nucleoside triphosphate and OAA. The protein is Phosphoenolpyruvate carboxykinase (ATP) of Sulfurimonas denitrificans (strain ATCC 33889 / DSM 1251) (Thiomicrospira denitrificans (strain ATCC 33889 / DSM 1251)).